Reading from the N-terminus, the 133-residue chain is Surface presentation of antigens protein SpaK (133 aa).

It belongs to the SpaK family. Homodimer.

In terms of biological role, required for surface presentation of invasion plasmid antigens. Chaperone specialized in the storage of effectors within the bacterial cytoplasm, maintaining them in a secretion-competent state, and allowing their immediate delivery to target cells upon contact of the bacterium with the host cells. Has been shown to chaperone IpaA, IpgB1, OspC3 and probably also OspB. The polypeptide is Surface presentation of antigens protein SpaK (spaK) (Shigella flexneri).